The primary structure comprises 302 residues: Glutamate/aspartate import solute-binding protein (302 aa).

An N-terminal signal peptide occupies residues 1 to 22 (MQLRKLTTAMLVMGLSAGLAHA).

The protein belongs to the bacterial solute-binding protein 3 family. As to quaternary structure, the complex is composed of two ATP-binding proteins (GltL), two transmembrane proteins (GltJ and GltK) and a solute-binding protein (GltI).

It localises to the periplasm. Its function is as follows. Part of the ABC transporter complex GltIJKL involved in glutamate and aspartate uptake. Binds to both glutamate and aspartate. The polypeptide is Glutamate/aspartate import solute-binding protein (gltI) (Salmonella typhimurium (strain LT2 / SGSC1412 / ATCC 700720)).